We begin with the raw amino-acid sequence, 243 residues long: Probable glycerol uptake facilitator protein (243 aa).

The next 2 membrane-spanning stretches (helical) occupy residues isoleucine 7–alanine 27 and leucine 44–valine 64. The NPA 1 motif lies at asparagine 72–alanine 74. The next 3 helical transmembrane spans lie at isoleucine 88 to isoleucine 108, isoleucine 143 to histidine 163, and threonine 166 to isoleucine 186. Residues asparagine 187–alanine 189 carry the NPA 2 motif. Residues leucine 221–isoleucine 241 form a helical membrane-spanning segment.

It belongs to the MIP/aquaporin (TC 1.A.8) family.

It is found in the cell membrane. The enzyme catalyses glycerol(in) = glycerol(out). Its function is as follows. Mediates glycerol diffusion across the cytoplasmic membrane via a pore-type mechanism. The sequence is that of Probable glycerol uptake facilitator protein (glpF) from Mycoplasmoides gallisepticum (strain R(low / passage 15 / clone 2)) (Mycoplasma gallisepticum).